Consider the following 515-residue polypeptide: MARMGLAGAAGRWWGLALGLTAFFLPGTHTQVVQVNDSMYGFIGTDVVLHCSFANPLPSVKITQVTWQKASNGSKQNMAIYNPTMGVSVLPPYEKRVEFLRPSFIDGTIRLSGLELEDEGMYICEFATFPTGNRESQLNLTVMAKPTNWIEGTRAVLRARKGQDDKVLVATCTSANGKPPSAVSWETRLKGEAEYQEIRNPNGTVTVISRYRLVPSREAHRQSLACIVNYHLDRFRESLTLNVQYEPEVTIEGFDGNWYLQRTDVKLTCKADANPPATEYHWTTLNGSLPKGVEAQNRTLFFRGPITYSLAGTYICEATNPIGTRSGQVEVNITEFPYTPTPEHGRRAGQMPTAIIGGVAGSVLLVLIVVGGIIVALRRRRHTFKGDYSTKKHVYGNGYSKAGIPQHHPPMAQNLQYPDDSDDEKKAGPLGGSSYEEEEEEEGGGGGERKVGGPHPKYDEDAKRPYFTVDEAEARQDGYGDRTLGYQYDPEQLDLAENMVSQNDGSFISKKEWYV.

Positions 1–30 (MARMGLAGAAGRWWGLALGLTAFFLPGTHT) are cleaved as a signal peptide. The 111-residue stretch at 31–141 (QVVQVNDSMY…GNRESQLNLT (111 aa)) folds into the Ig-like V-type domain. At 31-354 (QVVQVNDSMY…GRRAGQMPTA (324 aa)) the chain is on the extracellular side. N-linked (GlcNAc...) asparagine glycans are attached at residues Asn-36, Asn-72, Asn-139, Asn-202, Asn-286, Asn-297, and Asn-332. Residues Cys-51 and Cys-124 are joined by a disulfide bond. Ig-like C2-type domains are found at residues 145–243 (KPTN…TLNV) and 247–334 (PEVT…VNIT). 2 cysteine pairs are disulfide-bonded: Cys-172-Cys-226 and Cys-269-Cys-316. An interaction with FGFR region spans residues 282 to 299 (WTTLNGSLPKGVEAQNRT). The chain crosses the membrane as a helical span at residues 355–375 (IIGGVAGSVLLVLIVVGGIIV). Residues 376-515 (ALRRRRHTFK…SFISKKEWYV (140 aa)) are Cytoplasmic-facing. Residues 399–486 (YSKAGIPQHH…DGYGDRTLGY (88 aa)) form a disordered region. Phosphoserine is present on residues Ser-421, Ser-433, and Ser-434. The residue at position 435 (Tyr-435) is a Phosphotyrosine. Over residues 447-464 (GERKVGGPHPKYDEDAKR) the composition is skewed to basic and acidic residues. A Phosphoserine modification is found at Ser-509.

This sequence belongs to the nectin family. In terms of assembly, cis- and trans-homodimer. Can form trans-heterodimers with NECTIN3 and with NECTIN4. Interaction between NECTIN1 and NECTIN3 on the pre- and postsynaptic sites, respectively, initiates the formation of puncta adherentia junctions between axons and dendrites. Interacts (via cytoplasmic domain) with AFDN (via PDZ domain); this interaction recruits NECTIN1 to cadherin-based adherens junctions and provides a connection with the actin cytoskeleton. Interacts with integrin alphaV/beta3. Interacts (via Ig-like C2-type domain 2) with FGFR1, FGFR2 and FGFR3. As to quaternary structure, (Microbial infection) Interacts with herpes pseudorabies virus/PRV envelope glycoprotein D.

It is found in the cell membrane. The protein localises to the cell junction. The protein resides in the adherens junction. It localises to the presynaptic cell membrane. Its function is as follows. Cell adhesion molecule that promotes cell-cell contacts and plays important roles in the development of the nervous system. Acts by forming homophilic or heterophilic trans-dimers. Heterophilic interactions have been detected between NECTIN1 and NECTIN3 and between NECTIN1 and NECTIN4. Involved in axon guidance by promoting contacts between the commissural axons and the floor plate cells. Involved in synaptogegesis. Has some neurite outgrowth-promoting activity. Promotes formation of checkerboard-like cellular pattern of hair cells and supporting cells in the auditory epithelium via heterophilic interaction with NECTIN3: NECTIN1 is present in the membrane of hair cells and associates with NECTIN3 on supporting cells, thereby mediating heterotypic adhesion between these two cell types. Required for enamel mineralization. Functionally, (Microbial infection) Acts as a receptor for pseudorabies virus/PRV. The sequence is that of Nectin-1 from Mus musculus (Mouse).